The sequence spans 311 residues: Pyrimidine-specific ribonucleoside hydrolase RihA (311 aa).

H240 is a catalytic residue.

The protein belongs to the IUNH family. RihA subfamily.

Its function is as follows. Hydrolyzes with equal efficiency cytidine or uridine to ribose and cytosine or uracil, respectively. The protein is Pyrimidine-specific ribonucleoside hydrolase RihA of Escherichia fergusonii (strain ATCC 35469 / DSM 13698 / CCUG 18766 / IAM 14443 / JCM 21226 / LMG 7866 / NBRC 102419 / NCTC 12128 / CDC 0568-73).